A 228-amino-acid chain; its full sequence is Small ribosomal subunit protein uS3 (228 aa).

The KH type-2 domain maps to 39–107 (VREYLQDKLK…PVHINIEEIR (69 aa)).

Belongs to the universal ribosomal protein uS3 family. As to quaternary structure, part of the 30S ribosomal subunit. Forms a tight complex with proteins S10 and S14.

Binds the lower part of the 30S subunit head. Binds mRNA in the 70S ribosome, positioning it for translation. This is Small ribosomal subunit protein uS3 from Pseudomonas fluorescens (strain ATCC BAA-477 / NRRL B-23932 / Pf-5).